The sequence spans 640 residues: Dextranase (640 aa).

The N-terminal stretch at 1-32 is a signal peptide; it reads MPGTGLGRLAKHVTAAAAVFLISTGAVLPAQA.

It belongs to the glycosyl hydrolase 49 family.

It localises to the secreted. It catalyses the reaction Endohydrolysis of (1-&gt;6)-alpha-D-glucosidic linkages in dextran.. The polypeptide is Dextranase (Arthrobacter globiformis).